Consider the following 325-residue polypeptide: Brain mitochondrial carrier protein 1 (325 aa).

The next 6 helical transmembrane spans lie at 38–54, 112–128, 145–165, 199–215, 240–256, and 298–315; these read GLNWKPFVYGGLASIVA, LRQASYGTIKIGIYQSL, MICGVVSGVISSTIANPTDVL, GVVPTAQRAAIVVGVEL, VSSFTCGLAGALASNPV, and GFWPNWLRLGPWNIIFFI. 3 Solcar repeats span residues 42 to 131, 139 to 224, and 233 to 323; these read KPFV…LKRL, ETLL…TKKH, and DTIL…LKRL.

Belongs to the mitochondrial carrier (TC 2.A.29) family. As to quaternary structure, homotetramer. In terms of tissue distribution, mainly expressed in brain, particularly abundant in cortex, hippocampus thalamus, amygdala and hypothalamus. Highly expressed in heart and kidney, but not liver or lung (at protein level). In the nervous system, expressed in cortex, basal ganglia, substantia nigra, cerebellum, and spinal cord (at protein level).

It localises to the mitochondrion inner membrane. It carries out the reaction sulfite(in) + sulfate(out) = sulfite(out) + sulfate(in). It catalyses the reaction thiosulfate(in) + sulfate(out) = thiosulfate(out) + sulfate(in). The catalysed reaction is sulfate(out) + phosphate(in) = sulfate(in) + phosphate(out). The enzyme catalyses oxalate(in) + sulfate(out) = oxalate(out) + sulfate(in). It carries out the reaction malonate(in) + sulfate(out) = malonate(out) + sulfate(in). It catalyses the reaction maleate(in) + sulfate(out) = maleate(out) + sulfate(in). The catalysed reaction is (S)-malate(in) + sulfate(out) = (S)-malate(out) + sulfate(in). The enzyme catalyses (3S)-citramalate(in) + sulfate(out) = (3S)-citramalate(out) + sulfate(in). It carries out the reaction (3R)-citramalate(in) + sulfate(out) = (3R)-citramalate(out) + sulfate(in). It catalyses the reaction sulfate(out) + succinate(in) = sulfate(in) + succinate(out). The catalysed reaction is (S,S)-tartrate(in) + sulfate(out) = (S,S)-tartrate(out) + sulfate(in). The enzyme catalyses (2R,3R)-tartrate(in) + sulfate(out) = (2R,3R)-tartrate(out) + sulfate(in). It carries out the reaction D-aspartate(in) + sulfate(out) = D-aspartate(out) + sulfate(in). It catalyses the reaction L-aspartate(in) + sulfate(out) = L-aspartate(out) + sulfate(in). The catalysed reaction is sulfate(in) = sulfate(out). The enzyme catalyses phosphate(in) = phosphate(out). It carries out the reaction (S)-malate(out) = (S)-malate(in). It catalyses the reaction citrate(in) = citrate(out). The catalysed reaction is L-aspartate(out) = L-aspartate(in). The enzyme catalyses L-glutamate(out) = L-glutamate(in). It carries out the reaction H(+)(in) = H(+)(out). It catalyses the reaction chloride(in) = chloride(out). In terms of biological role, transports inorganic anions (sulfate, sulfite, thiosulfate and phosphate) and, to a lesser extent, a variety of dicarboxylates (e.g. malonate, malate and citramalate) and, even more so, aspartate and glutamate and tricarboxylates. May catalyze the export of sulfite and thiosulfate (the hydrogen sulfide degradation products) from the mitochondria, thereby modulating the level of the hydrogen sulfide. Also can mediate a very low unidirectional transport of anions including sulfate, phosphate, (S)-malate, citrate, L-aspartate and L-glutamate. Maintains oxidative balance (through uncoupling activities) and ATP production (by modifying mitochondrial membrane potential). Is able to transport protons across lipid membranes. Also exhibits transmembrane chloride transport activity to a lesser extent. May modify mitochondrial respiratory efficiency and mitochondrial oxidant production. This is Brain mitochondrial carrier protein 1 from Mus musculus (Mouse).